Reading from the N-terminus, the 126-residue chain is Holo-[acyl-carrier-protein] synthase (126 aa).

Mg(2+) is bound by residues D8 and E57.

The protein belongs to the P-Pant transferase superfamily. AcpS family. It depends on Mg(2+) as a cofactor.

The protein localises to the cytoplasm. The enzyme catalyses apo-[ACP] + CoA = holo-[ACP] + adenosine 3',5'-bisphosphate + H(+). Functionally, transfers the 4'-phosphopantetheine moiety from coenzyme A to a Ser of acyl-carrier-protein. This Geobacter sulfurreducens (strain ATCC 51573 / DSM 12127 / PCA) protein is Holo-[acyl-carrier-protein] synthase.